A 145-amino-acid polypeptide reads, in one-letter code: Putative BCoR-like protein 2 (145 aa).

Positions 1–27 are enriched in basic and acidic residues; that stretch reads MKEKLSKKRAEVKGNRSWLEEFLKPSD. The segment at 1 to 58 is disordered; the sequence is MKEKLSKKRAEVKGNRSWLEEFLKPSDNEEGPPPKNKVLSNNASSQKPTHSSCIPLLR. Residues 38–52 show a composition bias toward polar residues; that stretch reads VLSNNASSQKPTHSS.

The protein belongs to the BCOR family.

The polypeptide is Putative BCoR-like protein 2 (BCORP1) (Homo sapiens (Human)).